Here is a 162-residue protein sequence, read N- to C-terminus: Allophycocyanin subunit beta (162 aa).

Asn72 bears the N4-methylasparagine mark. Position 82 (Cys82) interacts with (2R,3E)-phycocyanobilin.

Belongs to the phycobiliprotein family. As to quaternary structure, heterohexamer of two alpha chains, one alpha-B chain and three beta chains. Contains one covalently linked phycocyanobilin chromophore. The chromophore is added by phycocyanobilin lyase CpcS 1.

It is found in the cellular thylakoid membrane. Its function is as follows. Light-harvesting photosynthetic bile pigment-protein from the phycobiliprotein complex. Allophycocyanin has a maximum absorption at approximately 650 to 653 nanometers. This Nostoc sp. (strain PCC 7120 / SAG 25.82 / UTEX 2576) protein is Allophycocyanin subunit beta (apcB).